Reading from the N-terminus, the 464-residue chain is ATP synthase subunit beta (464 aa).

Position 153–160 (153–160 (GGAGVGKT)) interacts with ATP.

Belongs to the ATPase alpha/beta chains family. F-type ATPases have 2 components, CF(1) - the catalytic core - and CF(0) - the membrane proton channel. CF(1) has five subunits: alpha(3), beta(3), gamma(1), delta(1), epsilon(1). CF(0) has three main subunits: a(1), b(2) and c(9-12). The alpha and beta chains form an alternating ring which encloses part of the gamma chain. CF(1) is attached to CF(0) by a central stalk formed by the gamma and epsilon chains, while a peripheral stalk is formed by the delta and b chains.

The protein resides in the cell inner membrane. The enzyme catalyses ATP + H2O + 4 H(+)(in) = ADP + phosphate + 5 H(+)(out). In terms of biological role, produces ATP from ADP in the presence of a proton gradient across the membrane. The catalytic sites are hosted primarily by the beta subunits. In Burkholderia ambifaria (strain ATCC BAA-244 / DSM 16087 / CCUG 44356 / LMG 19182 / AMMD) (Burkholderia cepacia (strain AMMD)), this protein is ATP synthase subunit beta.